A 476-amino-acid polypeptide reads, in one-letter code: Glutamate--tRNA ligase (476 aa).

The short motif at 9-19 is the 'HIGH' region element; that stretch reads PSPTGTLHLGT. Positions 248–252 match the 'KMSKS' region motif; it reads KLSKR. Lys-251 serves as a coordination point for ATP.

It belongs to the class-I aminoacyl-tRNA synthetase family. Glutamate--tRNA ligase type 1 subfamily. Monomer.

The protein localises to the cytoplasm. It catalyses the reaction tRNA(Glu) + L-glutamate + ATP = L-glutamyl-tRNA(Glu) + AMP + diphosphate. In terms of biological role, catalyzes the attachment of glutamate to tRNA(Glu) in a two-step reaction: glutamate is first activated by ATP to form Glu-AMP and then transferred to the acceptor end of tRNA(Glu). The sequence is that of Glutamate--tRNA ligase from Prochlorococcus marinus (strain NATL1A).